A 148-amino-acid chain; its full sequence is MSIIDNRKAFYDYSVEERYEAGLVLEGWEVKALRAGRGQIKEGYVVIKNNELFLIGTHISPLPEASTHINPDPVRTRKLLLHSEEISKLIGKVEQRGYTLVPLNFHYKGGRVKCEIGLAKGKKQHDKRETEKKRDWEREKARLMRSPG.

The segment at 119 to 148 is disordered; the sequence is AKGKKQHDKRETEKKRDWEREKARLMRSPG. Over residues 126-142 the composition is skewed to basic and acidic residues; that stretch reads DKRETEKKRDWEREKAR.

Belongs to the SmpB family.

It is found in the cytoplasm. Required for rescue of stalled ribosomes mediated by trans-translation. Binds to transfer-messenger RNA (tmRNA), required for stable association of tmRNA with ribosomes. tmRNA and SmpB together mimic tRNA shape, replacing the anticodon stem-loop with SmpB. tmRNA is encoded by the ssrA gene; the 2 termini fold to resemble tRNA(Ala) and it encodes a 'tag peptide', a short internal open reading frame. During trans-translation Ala-aminoacylated tmRNA acts like a tRNA, entering the A-site of stalled ribosomes, displacing the stalled mRNA. The ribosome then switches to translate the ORF on the tmRNA; the nascent peptide is terminated with the 'tag peptide' encoded by the tmRNA and targeted for degradation. The ribosome is freed to recommence translation, which seems to be the essential function of trans-translation. This is SsrA-binding protein from Paraburkholderia xenovorans (strain LB400).